The chain runs to 579 residues: Probable cholinesterase (579 aa).

An N-terminal signal peptide occupies residues 1–19 (MTDHKIIMLLLLGIYCIQA). 2 N-linked (GlcNAc...) asparagine; by host glycosylation sites follow: asparagine 77 and asparagine 144. Serine 217 serves as the catalytic Acyl-ester intermediate. Residues asparagine 257, asparagine 269, and asparagine 283 are each glycosylated (N-linked (GlcNAc...) asparagine; by host). Glutamate 337 serves as the catalytic Charge relay system. N-linked (GlcNAc...) asparagine; by host glycans are attached at residues asparagine 373 and asparagine 394. Histidine 451 functions as the Charge relay system in the catalytic mechanism. An N-linked (GlcNAc...) asparagine; by host glycan is attached at asparagine 469.

This sequence belongs to the type-B carboxylesterase/lipase family.

The enzyme catalyses an acylcholine + H2O = a carboxylate + choline + H(+). In terms of biological role, may be involved in the disruption of the host membrane. This chain is Probable cholinesterase, found in Acanthamoeba polyphaga mimivirus (APMV).